The following is a 450-amino-acid chain: Homogentisate 1,2-dioxygenase (450 aa).

H304 serves as the catalytic Proton acceptor. H347 and E353 together coordinate Fe cation. Y362 and H383 together coordinate homogentisate. H383 contributes to the Fe cation binding site.

Belongs to the homogentisate dioxygenase family. As to quaternary structure, hexamer; dimer of trimers. Requires Fe cation as cofactor.

The enzyme catalyses homogentisate + O2 = 4-maleylacetoacetate + H(+). Its pathway is amino-acid degradation; L-phenylalanine degradation; acetoacetate and fumarate from L-phenylalanine: step 4/6. Functionally, involved in the catabolism of homogentisate (2,5-dihydroxyphenylacetate or 2,5-OH-PhAc), a central intermediate in the degradation of phenylalanine and tyrosine. Catalyzes the oxidative ring cleavage of the aromatic ring of homogentisate to yield maleylacetoacetate. This is Homogentisate 1,2-dioxygenase from Burkholderia mallei (strain NCTC 10229).